Here is a 445-residue protein sequence, read N- to C-terminus: tRNA-2-methylthio-N(6)-dimethylallyladenosine synthase (445 aa).

The 117-residue stretch at 13–129 folds into the MTTase N-terminal domain; it reads KKLFIKTYGC…LPAMARAGRG (117 aa). 6 residues coordinate [4Fe-4S] cluster: C22, C58, C92, C163, C167, and C170. The 235-residue stretch at 149 to 383 folds into the Radical SAM core domain; sequence TRRAPAAFLT…LTSQQKAAQE (235 aa). One can recognise a TRAM domain in the interval 383–445; sequence EGMVGRELGV…PNSLAGVLAA (63 aa).

Belongs to the methylthiotransferase family. MiaB subfamily. Monomer. It depends on [4Fe-4S] cluster as a cofactor.

Its subcellular location is the cytoplasm. The catalysed reaction is N(6)-dimethylallyladenosine(37) in tRNA + (sulfur carrier)-SH + AH2 + 2 S-adenosyl-L-methionine = 2-methylsulfanyl-N(6)-dimethylallyladenosine(37) in tRNA + (sulfur carrier)-H + 5'-deoxyadenosine + L-methionine + A + S-adenosyl-L-homocysteine + 2 H(+). Its function is as follows. Catalyzes the methylthiolation of N6-(dimethylallyl)adenosine (i(6)A), leading to the formation of 2-methylthio-N6-(dimethylallyl)adenosine (ms(2)i(6)A) at position 37 in tRNAs that read codons beginning with uridine. The chain is tRNA-2-methylthio-N(6)-dimethylallyladenosine synthase from Paracoccus denitrificans (strain Pd 1222).